Consider the following 203-residue polypeptide: uncharacterized protein (203 aa).

A helical membrane pass occupies residues 180–200 (VYLLLFGIPLLILIFLIIFFI).

It localises to the virion. Its subcellular location is the host membrane. This is an uncharacterized protein from Acanthamoeba polyphaga (Amoeba).